A 617-amino-acid chain; its full sequence is Phosphatidylinositol-3,5-bisphosphate 3-phosphatase MTMR6 (617 aa).

The 101-residue stretch at M1–Q101 folds into the GRAM domain. Residues E2–N141 form an interaction with RAB1B region. The residue at position 108 (Y108) is a Phosphotyrosine. The region spanning G124–Y499 is the Myotubularin phosphatase domain. N248, N273, and I274 together coordinate a 1,2-diacyl-sn-glycero-3-phospho-(1D-myo-inositol-3,5-bisphosphate). Residues N248, N273, and I274 each contribute to the a 1,2-diacyl-sn-glycero-3-phospho-(1D-myo-inositol-3-phosphate) site. The Phosphocysteine intermediate role is filled by C336. 8 residues coordinate a 1,2-diacyl-sn-glycero-3-phospho-(1D-myo-inositol-3,5-bisphosphate): S337, D338, G339, W340, D341, R342, K378, and R382. Positions 337, 338, 339, 340, 341, and 342 each coordinate a 1,2-diacyl-sn-glycero-3-phospho-(1D-myo-inositol-3-phosphate). A 1,2-diacyl-sn-glycero-3-phospho-(1D-myo-inositol-3-phosphate) is bound at residue R382. S557, S585, and S607 each carry phosphoserine.

This sequence belongs to the protein-tyrosine phosphatase family. Non-receptor class myotubularin subfamily. In terms of assembly, homodimer. Heterodimer (via C-terminus) with MTMR9 (via C-terminus). Interacts with ALKBH4. Interacts with KCNN4. Interacts (via GRAM domain) with RAB1B (in GDP-bound form); the interaction regulates MTMR6 recruitment to the endoplasmic reticulum-Golgi intermediate compartment. As to expression, isoform 1: Ubiquitously expressed including in heart, brain, spleen, lung, liver, muscle, kidney and testis (at protein level). Isoform 2: Expressed in testis (at protein level).

Its subcellular location is the cytoplasm. The protein resides in the endoplasmic reticulum-Golgi intermediate compartment. It localises to the cell projection. The protein localises to the ruffle membrane. It is found in the endoplasmic reticulum. It catalyses the reaction a 1,2-diacyl-sn-glycero-3-phospho-(1D-myo-inositol-3,5-bisphosphate) + H2O = a 1,2-diacyl-sn-glycero-3-phospho-(1D-myo-inositol-5-phosphate) + phosphate. The catalysed reaction is a 1,2-diacyl-sn-glycero-3-phospho-(1D-myo-inositol-3-phosphate) + H2O = a 1,2-diacyl-sn-glycero-3-phospho-(1D-myo-inositol) + phosphate. The enzyme catalyses 1,2-dioctanoyl-sn-glycero-3-phospho-(1D-myo-inositol-3,5-bisphosphate) + H2O = 1,2-dioctanoyl-sn-glycero-3-phospho-(1D-myo-inositol-5-phosphate) + phosphate. It carries out the reaction 1,2-dioctanoyl-sn-glycero-3-phospho-(1-D-myo-inositol-3-phosphate) + H2O = 1,2-dioctanoyl-sn-glycero-3-phospho-(1D-myo-inositol) + phosphate. With respect to regulation, allosterically activated by phosphatidylserine and/or phosphatidylinositol 4-phosphate (PtdIns(4)P), and phosphatidylinositol 5-phosphate (PtdIns(5)P). Interaction with MTMR9 increases catalytic activity towards phosphatidylinositol 3,5-bisphosphate. Its function is as follows. Lipid phosphatase that specifically dephosphorylates the D-3 position of phosphatidylinositol 3-phosphate and phosphatidylinositol 3,5-bisphosphate, generating phosphatidylinositol and phosphatidylinositol 5-phosphate. Binds with high affinity to phosphatidylinositol 3,5-bisphosphate (PtdIns(3,5)P2) but also to phosphatidylinositol 3-phosphate (PtdIns(3)P), phosphatidylinositol 4-phosphate (PtdIns(4)P), and phosphatidylinositol 5-phosphate (PtdIns(5)P), phosphatidic acid and phosphatidylserine. Negatively regulates ER-Golgi protein transport. Probably in association with MTMR9, plays a role in the late stages of macropinocytosis by dephosphorylating phosphatidylinositol 3-phosphate in membrane ruffles. Acts as a negative regulator of KCNN4/KCa3.1 channel activity in CD4(+) T-cells possibly by decreasing intracellular levels of phosphatidylinositol 3-phosphate. Negatively regulates proliferation of reactivated CD4(+) T-cells. In complex with MTMR9, negatively regulates DNA damage-induced apoptosis. The formation of the MTMR6-MTMR9 complex stabilizes both MTMR6 and MTMR9 protein levels. The protein is Phosphatidylinositol-3,5-bisphosphate 3-phosphatase MTMR6 of Mus musculus (Mouse).